A 155-amino-acid polypeptide reads, in one-letter code: SsrA-binding protein (155 aa).

A compositionally biased stretch (basic and acidic residues) spans 135–147; the sequence is TIKRRDQERDIKK. The interval 135-155 is disordered; it reads TIKRRDQERDIKKQMKHYNAR.

Belongs to the SmpB family.

The protein localises to the cytoplasm. Its function is as follows. Required for rescue of stalled ribosomes mediated by trans-translation. Binds to transfer-messenger RNA (tmRNA), required for stable association of tmRNA with ribosomes. tmRNA and SmpB together mimic tRNA shape, replacing the anticodon stem-loop with SmpB. tmRNA is encoded by the ssrA gene; the 2 termini fold to resemble tRNA(Ala) and it encodes a 'tag peptide', a short internal open reading frame. During trans-translation Ala-aminoacylated tmRNA acts like a tRNA, entering the A-site of stalled ribosomes, displacing the stalled mRNA. The ribosome then switches to translate the ORF on the tmRNA; the nascent peptide is terminated with the 'tag peptide' encoded by the tmRNA and targeted for degradation. The ribosome is freed to recommence translation, which seems to be the essential function of trans-translation. The sequence is that of SsrA-binding protein from Streptococcus pyogenes serotype M12 (strain MGAS2096).